The primary structure comprises 300 residues: Ribosomal protein L11 methyltransferase (300 aa).

Thr152, Gly173, Asp195, and Asn234 together coordinate S-adenosyl-L-methionine.

Belongs to the methyltransferase superfamily. PrmA family.

The protein localises to the cytoplasm. It catalyses the reaction L-lysyl-[protein] + 3 S-adenosyl-L-methionine = N(6),N(6),N(6)-trimethyl-L-lysyl-[protein] + 3 S-adenosyl-L-homocysteine + 3 H(+). In terms of biological role, methylates ribosomal protein L11. In Burkholderia cenocepacia (strain HI2424), this protein is Ribosomal protein L11 methyltransferase.